The chain runs to 264 residues: Undecaprenyl-diphosphatase (264 aa).

A run of 7 helical transmembrane segments spans residues 38 to 58, 75 to 95, 106 to 126, 136 to 156, 181 to 201, 217 to 237, and 242 to 262; these read RSDF…VLVF, REYV…GLVV, VSPV…VEAY, VTWT…VFPG, FVFL…FLEM, VAFL…MGYI, and FTAF…WLPS.

It belongs to the UppP family.

The protein resides in the cell membrane. It catalyses the reaction di-trans,octa-cis-undecaprenyl diphosphate + H2O = di-trans,octa-cis-undecaprenyl phosphate + phosphate + H(+). Its function is as follows. Catalyzes the dephosphorylation of undecaprenyl diphosphate (UPP). Confers resistance to bacitracin. In Stenotrophomonas maltophilia (strain K279a), this protein is Undecaprenyl-diphosphatase.